The following is a 999-amino-acid chain: MEPGKRRTKDDTWKADDLRKHLKVQSGSPKEEKKLREKKAHKDSESAAPEYREHKSRDPDREARHKEKTAERDLYTSTEHPRGERDRERHKERRKDAKDREKDKLKERHRDQEAEKAHSRGKDREREKDRRARKEEIRQSMAYHDLLSRDMRGRQMAEKVEKKASKIRTEERERRDEDSERIDEDRERRYRERKLQYGDSKEHPLSYWLYKEDGEKKHRKAKDADREKRLREKSSMREKRERHAREKGSSLSDREVEDRHREKRHKEGLHYDDERRRSHADKKERSSKEEHKKRELKELEKEDNDLEATGPDEYLPNLEDDFVDYEDDFEVCDGDDDSNNEHEAREKAEELPLAQKREIQEIQKAISAENERVGELSLKMFQKQGWTEYTKEPWTDANDSPSRTPVCGIFVDFATASHRQKSRSQALKQKTRSSKLLRLIDLDFSFTFSLLDLPPVNEYDMYIRNFGKKNTKQAYVQYNEDNVERDIQTEDIETREVWTQHPGEGTAVSGGSEEKDFSDVTVVPKIDTPRLANFLRAACQVVAVLLEEDRLAAGPSWIPRAQDKALNISDSSSQLNTSLPFLQSRKVSCLHASRVQRQTVVSVHDLPEKAFAPSLDSRHLLCVWDIWQPSGPQKVLICESKVTCCCFSPLKAFLLFAGTVHGSVVVWDLREDSRIHHYVRLSNCFWAFRTPTFSTDGILTSVNHRSPLQAIEPVATSAYKKQSFVLSPFSTQEEMAGLSFHIASLDETGVLNVWVVVELPKADISGSMSDLGLIPGGRIKLVHSTVIQLGNSLSHKDSELWGSTQTLSVKFLPSDPNHFVVGTDMGLISHSTRQDWRVSPRVFKPEQHGVRPIKVNVIDFSPFEETVFLAGCSDGSIRLHQLTSERPIMQWDNSTSGHAVTSLQWSPTRPAVFLVQDDASRIYVWDLLENDLGPVAQQPISPDKLVAMTIVGEPEKTSGSFVALVLARTSGTVDVQNLKRRWTTPAVDEHSQLRLLLQK.

4 stretches are compositionally biased toward basic and acidic residues: residues 1–19 (MEPG…DDLR), 29–138 (PKEE…EEIR), 146–260 (LLSR…EDRH), and 268–300 (GLHY…KELE). Residues 1-350 (MEPGKRRTKD…EHEAREKAEE (350 aa)) form a disordered region. Ser-250 is subject to Phosphoserine. The segment covering 318 to 338 (LEDDFVDYEDDFEVCDGDDDS) has biased composition (acidic residues). Basic and acidic residues predominate over residues 339–350 (NNEHEAREKAEE). Residues 416–495 (ASHRQKSRSQ…DIQTEDIETR (80 aa)) are binding to the DYNLT2B-DYNLT1/DYNLT3 dimer. WD repeat units lie at residues 637 to 677 (ICES…RIHH), 718 to 764 (AYKK…KADI), 850 to 890 (VRPI…PIMQ), and 895 to 935 (TSGH…LGPV).

The protein belongs to the dynein light intermediate chain family. In terms of assembly, intermediate chain of the cytoplasmic dynein complex 2, a multisubunit complex, composed at least of eleven different proteins. The cytoplasmic dynein 2 complex consists of two catalytic heavy chains (HCs) and a number of non-catalytic subunits presented by intermediate chains (ICs), light intermediate chains (LICs) and light chains (LCs). Among them, a heavy chain (DYNC2H1), two intermediate chains (DYNC2I2 and DYNC2I1), a light intermediate chain (DYNC2LI1), and a light chain (DYNLT2B) are unique to the cytoplasmic dynein complex 2, but a subset of the light chains are also shared by dynein-1 and dynein-2 complexes. Interacts with DYNC2I2; their C-terminal domains each bind a copy of the heavy chain, and their extended N-terminal regions are held together by an array of light chain dimers. Interacts with DYNLT2B. Interacts (via the N-terminal half) with DYNLT2B-DYNLT1 dimer or with DYNLT2B-DYNLT3 dimer; this interaction is crucial for retrograde trafficking of ciliary proteins.

It localises to the cell projection. The protein resides in the cilium. The protein localises to the cytoplasm. Its subcellular location is the cytoskeleton. It is found in the microtubule organizing center. It localises to the centrosome. Functionally, acts as one of several non-catalytic accessory components of the cytoplasmic dynein 2 complex (dynein-2 complex), a motor protein complex that drives the movement of cargos along microtubules within cilia and flagella in concert with the intraflagellar transport (IFT) system. DYNC2I1 plays a major role in retrograde ciliary protein trafficking in cilia and flagella. Also requires to maintain a functional transition zone. This chain is Cytoplasmic dynein 2 intermediate chain 1 (Dync2i1), found in Mus musculus (Mouse).